Consider the following 125-residue polypeptide: UPF0738 protein GTNG_0708 (125 aa).

The protein belongs to the UPF0738 family.

This is UPF0738 protein GTNG_0708 from Geobacillus thermodenitrificans (strain NG80-2).